The chain runs to 91 residues: Defensin-like protein 82 (91 aa).

Residues 1 to 27 (MAIKKFSSLLLPLLMVLALVVLPIISG) form the signal peptide. 4 cysteine pairs are disulfide-bonded: cysteine 34–cysteine 72, cysteine 41–cysteine 62, cysteine 47–cysteine 70, and cysteine 51–cysteine 71.

It belongs to the DEFL family.

It localises to the secreted. The chain is Defensin-like protein 82 from Arabidopsis thaliana (Mouse-ear cress).